Consider the following 159-residue polypeptide: Aspartate carbamoyltransferase regulatory chain (159 aa).

Positions 113, 118, 143, and 146 each coordinate Zn(2+).

It belongs to the PyrI family. In terms of assembly, contains catalytic and regulatory chains. The cofactor is Zn(2+).

Functionally, involved in allosteric regulation of aspartate carbamoyltransferase. The sequence is that of Aspartate carbamoyltransferase regulatory chain from Methanococcoides burtonii (strain DSM 6242 / NBRC 107633 / OCM 468 / ACE-M).